A 64-amino-acid chain; its full sequence is MPKAKTHSGASKRFRRTGTGKIVRQKANRRHLFEHKPSTRTRRLDGHTRVSANDTQRVNSLLNG.

Disordered stretches follow at residues 1 to 22 (MPKA…TGKI) and 34 to 64 (EHKP…LLNG). Positions 34-48 (EHKPSTRTRRLDGHT) are enriched in basic and acidic residues. A compositionally biased stretch (polar residues) spans 50-64 (VSANDTQRVNSLLNG).

It belongs to the bacterial ribosomal protein bL35 family.

This is Large ribosomal subunit protein bL35 from Mycobacterium leprae (strain Br4923).